The chain runs to 351 residues: UDP-N-acetylglucosamine--N-acetylmuramyl-(pentapeptide) pyrophosphoryl-undecaprenol N-acetylglucosamine transferase (351 aa).

Residues threonine 11–glycine 13, asparagine 120, arginine 161, serine 187, and glutamine 281 each bind UDP-N-acetyl-alpha-D-glucosamine.

It belongs to the glycosyltransferase 28 family. MurG subfamily.

Its subcellular location is the cell inner membrane. It carries out the reaction di-trans,octa-cis-undecaprenyl diphospho-N-acetyl-alpha-D-muramoyl-L-alanyl-D-glutamyl-meso-2,6-diaminopimeloyl-D-alanyl-D-alanine + UDP-N-acetyl-alpha-D-glucosamine = di-trans,octa-cis-undecaprenyl diphospho-[N-acetyl-alpha-D-glucosaminyl-(1-&gt;4)]-N-acetyl-alpha-D-muramoyl-L-alanyl-D-glutamyl-meso-2,6-diaminopimeloyl-D-alanyl-D-alanine + UDP + H(+). It participates in cell wall biogenesis; peptidoglycan biosynthesis. Its function is as follows. Cell wall formation. Catalyzes the transfer of a GlcNAc subunit on undecaprenyl-pyrophosphoryl-MurNAc-pentapeptide (lipid intermediate I) to form undecaprenyl-pyrophosphoryl-MurNAc-(pentapeptide)GlcNAc (lipid intermediate II). The polypeptide is UDP-N-acetylglucosamine--N-acetylmuramyl-(pentapeptide) pyrophosphoryl-undecaprenol N-acetylglucosamine transferase (Rippkaea orientalis (strain PCC 8801 / RF-1) (Cyanothece sp. (strain PCC 8801))).